A 297-amino-acid polypeptide reads, in one-letter code: Octopine catabolism/uptake operon regulatory protein OccR (297 aa).

In terms of domain architecture, HTH lysR-type spans 1 to 58 (MNLRQVEAFRAVMLTGQMTAAAELMLVTQPAISRLIKDFERATKLQLFERRGNHIIPT). Positions 18-37 (MTAAAELMLVTQPAISRLIK) form a DNA-binding region, H-T-H motif.

This sequence belongs to the LysR transcriptional regulatory family.

Positive regulatory protein for the occ operon involved in octopine catabolism and uptake. Also acts as a negative regulator of its expression. This is Octopine catabolism/uptake operon regulatory protein OccR (occR) from Rhizobium meliloti (Ensifer meliloti).